Reading from the N-terminus, the 925-residue chain is Ectonucleotide pyrophosphatase/phosphodiesterase family member 1 (925 aa).

Over residues 1–17 (MERDGCAGGGSRGGEGG) the composition is skewed to gly residues. Residues 1-43 (MERDGCAGGGSRGGEGGRAPREGPAGNGRDRGRSHAAEAPGDP) are disordered. The Cytoplasmic segment spans residues 1 to 76 (MERDGCAGGG…RTAKDPNTYK (76 aa)). The Di-leucine motif signature appears at 45–52 (AAASLLAP). The chain crosses the membrane as a helical; Signal-anchor for type II membrane protein span at residues 77 to 97 (VLSLVLSVCVLTTILGCIFGL). The Extracellular portion of the chain corresponds to 98-925 (KPSCAKEVKS…THLPTFSQED (828 aa)). 2 consecutive SMB domains span residues 104–144 (EVKS…IEPE) and 145–189 (HIWT…GEKS). Cystine bridges form between Cys-108/Cys-122, Cys-112/Cys-140, Cys-120/Cys-133, Cys-126/Cys-132, Cys-149/Cys-166, Cys-154/Cys-184, Cys-164/Cys-177, Cys-170/Cys-176, Cys-195/Cys-241, and Cys-203/Cys-415. Asn-179 is a glycosylation site (N-linked (GlcNAc...) asparagine). Positions 191–591 (VEEPCESINE…APNNGTHGSL (401 aa)) are phosphodiesterase. AMP is bound by residues Asp-218, Thr-256, and Asn-277. Asp-218 and Thr-256 together coordinate Zn(2+). Catalysis depends on Thr-256, which acts as the AMP-threonine intermediate. The CMP site is built by Thr-256 and Asn-277. DTMP contacts are provided by Thr-256 and Asn-277. GMP contacts are provided by Thr-256 and Asn-277. At Thr-256 the chain carries Phosphothreonine. N-linked (GlcNAc...) asparagine glycosylation is present at Asn-285. GMP contacts are provided by Leu-290, Lys-295, and Tyr-340. AMP is bound by residues Lys-295 and Tyr-340. The CMP site is built by Lys-295 and Tyr-340. Tyr-340 is a binding site for dTMP. N-linked (GlcNAc...) asparagine glycosylation is present at Asn-341. Asp-376 is a binding site for AMP. Positions 376, 380, 423, and 424 each coordinate Zn(2+). Asp-376 contacts CMP. Asp-376 contacts dTMP. Position 376 (Asp-376) interacts with GMP. His-380 serves as a coordination point for 2',3'-cGAMP. His-424 contributes to the AMP binding site. His-424 is a binding site for CMP. His-424 serves as a coordination point for dTMP. His-424 contributes to the GMP binding site. Disulfide bonds link Cys-431/Cys-530, Cys-480/Cys-868, Cys-614/Cys-672, Cys-626/Cys-726, Cys-628/Cys-711, and Cys-838/Cys-848. N-linked (GlcNAc...) asparagine glycosylation occurs at Asn-477. Ser-532 contributes to the 2',3'-cGAMP binding site. AMP is bound at residue His-535. His-535 is a binding site for Zn(2+). Position 535 (His-535) interacts with CMP. Residue His-535 participates in dTMP binding. His-535 is a binding site for GMP. Asn-585, Asn-643, Asn-700, Asn-731, and Asn-748 each carry an N-linked (GlcNAc...) asparagine glycan. Residues 597 to 647 (NPVYTPKHPKEVHPLVQCPFTRNPRDNLGCSCNPSILPIEDFQTQFNLTVA) are linker. The nuclease-like domain stretch occupies residues 654–925 (HETLPYGRPR…THLPTFSQED (272 aa)). Ca(2+) is bound by residues Asp-800, Asp-802, Asp-804, Arg-806, and Asp-808.

This sequence belongs to the nucleotide pyrophosphatase/phosphodiesterase family. In terms of assembly, homodimer. Interacts with INSR; leading to inhibit INSR autophosphorylation and subsequent activation of INSR kinase activity. Monomeric. Zn(2+) serves as cofactor. Autophosphorylated as part of the catalytic cycle of phosphodiesterase/pyrophosphatase activity. In terms of processing, N-glycosylated. Post-translationally, the secreted form is produced through cleavage at Lys-103 by intracellular processing. Expressed in plasma cells and also in a number of non-lymphoid tissues, including the distal convoluted tubule of the kidney, chondrocytes and epididymis. Expressed in melanocytes but not in keratinocytes.

The protein resides in the cell membrane. The protein localises to the basolateral cell membrane. Its subcellular location is the secreted. It carries out the reaction Hydrolytically removes 5'-nucleotides successively from the 3'-hydroxy termini of 3'-hydroxy-terminated oligonucleotides.. The catalysed reaction is a ribonucleoside 5'-triphosphate + H2O = a ribonucleoside 5'-phosphate + diphosphate + H(+). The enzyme catalyses ATP + H2O = AMP + diphosphate + H(+). It catalyses the reaction UTP + H2O = UMP + diphosphate + H(+). It carries out the reaction GTP + H2O = GMP + diphosphate + H(+). The catalysed reaction is CTP + H2O = CMP + diphosphate + H(+). The enzyme catalyses 2',3'-cGAMP + 2 H2O = GMP + AMP + 2 H(+). It catalyses the reaction P(1),P(4)-bis(5'-adenosyl) tetraphosphate + H2O = AMP + ATP + 2 H(+). It carries out the reaction 3',5'-cyclic AMP + H2O = AMP + H(+). Its activity is regulated as follows. At low concentrations of ATP, a phosphorylated intermediate is formed which inhibits further hydrolysis. In terms of biological role, nucleotide pyrophosphatase that generates diphosphate (PPi) and functions in bone mineralization and soft tissue calcification by regulating pyrophosphate levels. PPi inhibits bone mineralization and soft tissue calcification by binding to nascent hydroxyapatite crystals, thereby preventing further growth of these crystals. Preferentially hydrolyzes ATP, but can also hydrolyze other nucleoside 5' triphosphates such as GTP, CTP and UTP to their corresponding monophosphates with release of pyrophosphate, as well as diadenosine polyphosphates, and also 3',5'-cAMP to AMP. May also be involved in the regulation of the availability of nucleotide sugars in the endoplasmic reticulum and Golgi, and the regulation of purinergic signaling. Inhibits ectopic joint calcification and maintains articular chondrocytes by repressing hedgehog signaling; it is however unclear whether hedgehog inhibition is direct or indirect. Appears to modulate insulin sensitivity and function. Also involved in melanogenesis. Also able to hydrolyze 2',3'-cGAMP (cyclic GMP-AMP), a second messenger that activates TMEM173/STING and triggers type-I interferon production. 2',3'-cGAMP degradation takes place in the lumen or extracellular space, and not in the cytosol where it is produced; the role of 2',3'-cGAMP hydrolysis is therefore unclear. Not able to hydrolyze the 2',3'-cGAMP linkage isomer 3'-3'-cGAMP. This chain is Ectonucleotide pyrophosphatase/phosphodiesterase family member 1, found in Homo sapiens (Human).